Here is a 1381-residue protein sequence, read N- to C-terminus: Major capsid protein (1381 aa).

The protein belongs to the herpesviridae major capsid protein family. Homomultimer. Makes the hexons and eleven out of twelve pentons. Interacts with triplex proteins 1/TRX1 and 2/TRX2; adjacent capsomers are linked together in groups of three by triplexes, heterotrimeric complexes composed of one molecule of TRX1 and two molecules of TRX2. Interacts with scaffold protein; this interaction allows efficient MCP transport to the host nucleus. Interacts with capsid vertex component 2/CVC2. Interacts with the small capsomere-interacting protein/SCP.

The protein localises to the virion. The protein resides in the host nucleus. Its function is as follows. Self-assembles to form an icosahedral capsid with a T=16 symmetry, about 200 nm in diameter, and consisting of 150 hexons and 12 pentons (total of 162 capsomers). Hexons form the edges and faces of the capsid and are each composed of six MCP molecules. In contrast, one penton is found at each of the 12 vertices. Eleven of the pentons are MCP pentamers, while the last vertex is occupied by the portal complex. The capsid is surrounded by a layer of proteinaceous material designated the tegument which, in turn, is enclosed in an envelope of host cell-derived lipids containing virus-encoded glycoproteins. The sequence is that of Major capsid protein from Epstein-Barr virus (strain AG876) (HHV-4).